A 555-amino-acid chain; its full sequence is MATNRAKSSTKYIFVTGGVASSLGKGLTAASLGQLLSSRGLRVTMQKLDPYLNVDPGTMNPFEHGEVFVTEDGAETDLDLGHYERFLDRNLSAAGNVTTGKVYSNVIAKERRGEFLGKTVQVIPHITDEIKSAVLAMGQPDKNGQAPDVVISEIGGTVGDIESQPFLEAIRQVRHEAGRENIAFIHVSLVPYLAPSGELKTKPTQHSVAELRSIGIVPDAIVLRADREVPQAMKSKIALMCDVDEDGVVSCPDAPSIYDIPKVLHSQHLDNYIIRRLNLPFRDVDWTTWGNLLESVHNPQGEVTIGIVGKYIDLPDAYLSVAEAIRAGGFGANVRANVKWVASDECETEKGAAEALKDVDGVVIPGGFGNRGIEGKIGAITYARKNKLPLLGICLGLQCIVIEAARTAGLTDASSTEFDANASTPVISTMEEQKAAVSGEADLGGTMRLGAYPARLAEGSLVAEMYGATDVSERHRHRYEVNNAYREQITEGSGLQFSGTSPDGTLVEFVEYPKDVHPYFVATQAHPEYKSRPTRSHPLFQGLVDAALKHQAGRS.

The amidoligase domain stretch occupies residues 1-279 (MATNRAKSST…DNYIIRRLNL (279 aa)). Position 21 (serine 21) interacts with CTP. UTP is bound at residue serine 21. ATP contacts are provided by residues 22–27 (SLGKGL) and aspartate 79. Positions 79 and 153 each coordinate Mg(2+). CTP is bound by residues 160–162 (DIE), 200–205 (KTKPTQ), and lysine 236. UTP-binding positions include 200 to 205 (KTKPTQ) and lysine 236. The Glutamine amidotransferase type-1 domain maps to 304-553 (TIGIVGKYID…VDAALKHQAG (250 aa)). Residue glycine 367 coordinates L-glutamine. The active-site Nucleophile; for glutamine hydrolysis is cysteine 394. Residues 395-398 (LGLQ), glutamate 417, and arginine 478 each bind L-glutamine. Residues histidine 526 and glutamate 528 contribute to the active site.

It belongs to the CTP synthase family. Homotetramer.

It catalyses the reaction UTP + L-glutamine + ATP + H2O = CTP + L-glutamate + ADP + phosphate + 2 H(+). The catalysed reaction is L-glutamine + H2O = L-glutamate + NH4(+). The enzyme catalyses UTP + NH4(+) + ATP = CTP + ADP + phosphate + 2 H(+). Its pathway is pyrimidine metabolism; CTP biosynthesis via de novo pathway; CTP from UDP: step 2/2. Allosterically activated by GTP, when glutamine is the substrate; GTP has no effect on the reaction when ammonia is the substrate. The allosteric effector GTP functions by stabilizing the protein conformation that binds the tetrahedral intermediate(s) formed during glutamine hydrolysis. Inhibited by the product CTP, via allosteric rather than competitive inhibition. Its function is as follows. Catalyzes the ATP-dependent amination of UTP to CTP with either L-glutamine or ammonia as the source of nitrogen. Regulates intracellular CTP levels through interactions with the four ribonucleotide triphosphates. This is CTP synthase from Corynebacterium jeikeium (strain K411).